A 127-amino-acid polypeptide reads, in one-letter code: MFRTMMKSKIHRATVTEANLKYVGSITIDEELLEVADILPNEKVQVVNNNNGARLETYVIPGKRGERTVCLNGAAARLVQVGDEVIIIAYGIFTDEAARTYEPKVIFVDEGNNPVKIAHEEIHGQQS.

Ser25 serves as the catalytic Schiff-base intermediate with substrate; via pyruvic acid. The residue at position 25 (Ser25) is a Pyruvic acid (Ser). Thr57 lines the substrate pocket. The active-site Proton donor is Tyr58. 73-75 (GAA) contributes to the substrate binding site.

This sequence belongs to the PanD family. Heterooctamer of four alpha and four beta subunits. Pyruvate serves as cofactor. Post-translationally, is synthesized initially as an inactive proenzyme, which is activated by self-cleavage at a specific serine bond to produce a beta-subunit with a hydroxyl group at its C-terminus and an alpha-subunit with a pyruvoyl group at its N-terminus.

It is found in the cytoplasm. It carries out the reaction L-aspartate + H(+) = beta-alanine + CO2. Its pathway is cofactor biosynthesis; (R)-pantothenate biosynthesis; beta-alanine from L-aspartate: step 1/1. Catalyzes the pyruvoyl-dependent decarboxylation of aspartate to produce beta-alanine. The sequence is that of Aspartate 1-decarboxylase from Desulfitobacterium hafniense (strain DSM 10664 / DCB-2).